The following is a 384-amino-acid chain: S-adenosylmethionine synthase (384 aa).

His-15 provides a ligand contact to ATP. Position 17 (Asp-17) interacts with Mg(2+). K(+) is bound at residue Glu-43. Residues Glu-56 and Gln-99 each contribute to the L-methionine site. Residues 99–109 form a flexible loop region; it reads QSPDINQGVDR. ATP-binding positions include 164-166, 230-231, Asp-239, 245-246, Ala-262, and Lys-266; these read DAK, RF, and RK. Position 239 (Asp-239) interacts with L-methionine. Lys-270 contributes to the L-methionine binding site.

This sequence belongs to the AdoMet synthase family. As to quaternary structure, homotetramer; dimer of dimers. Requires Mg(2+) as cofactor. The cofactor is K(+).

It is found in the cytoplasm. The enzyme catalyses L-methionine + ATP + H2O = S-adenosyl-L-methionine + phosphate + diphosphate. Its pathway is amino-acid biosynthesis; S-adenosyl-L-methionine biosynthesis; S-adenosyl-L-methionine from L-methionine: step 1/1. Its function is as follows. Catalyzes the formation of S-adenosylmethionine (AdoMet) from methionine and ATP. The overall synthetic reaction is composed of two sequential steps, AdoMet formation and the subsequent tripolyphosphate hydrolysis which occurs prior to release of AdoMet from the enzyme. The protein is S-adenosylmethionine synthase of Escherichia coli (strain K12 / DH10B).